A 142-amino-acid polypeptide reads, in one-letter code: MRHYETMFILKPTLVEEEIKSKIEFYKEVITKHHGVIETSLDMGMRNLAYEIKKHKRGYYYVAYFKAEPSMILELERLYRINEDVLRFIVIKYESKKEVEAWHALVDRANKKPSHAKEKHEKTEHTHSHHLEEAESVGSHSE.

Residues asparagine 110 to glutamate 133 are compositionally biased toward basic and acidic residues. A disordered region spans residues asparagine 110 to glutamate 142.

Belongs to the bacterial ribosomal protein bS6 family.

In terms of biological role, binds together with bS18 to 16S ribosomal RNA. The sequence is that of Small ribosomal subunit protein bS6 from Helicobacter pylori (strain HPAG1).